The sequence spans 86 residues: MSEIKLKYDTVIKTLDSVKDALADVSIGAAGSNGKNSLDYTKKYHEREENIKTMLGDYKKAVQKNIEDTKDNVDSLKEQDEAIAVK.

Residues 57–83 (DYKKAVQKNIEDTKDNVDSLKEQDEAI) adopt a coiled-coil conformation.

The protein is Protein YwqI (ywqI) of Bacillus subtilis (strain 168).